We begin with the raw amino-acid sequence, 4462 residues long: MTMAPDVRLEYLEEVASIVLKFKPDKWSKLIGAEENVALFTEFFEKPDVQVLVLTLNAAGMIIPCLGFPQSLKSKGVYFIKTKSENINKDNYRARLLYGDISPTPVDQLIAVVEEVLSSLLNQSENMAGWPQVVSEDIVKQVHRLKNEMFVMSGKIKGKTLLPIPEHLGSLDGTLESMERIPSSLDNLLLHAIETTIIDWSHQIRDVLSKDSAQALLDGLHPLPQVEFEFWDTRLLNLKCIHEQLNRPKVNKIVEILEKAKSCYWPALQNVYTNVTEGLKEANDIVLYLKPLRILLEEMEQADFTMLPTFIAKVLDTICFIWATSEYYNTPARIIVILQEFCNQIIEMTRTFLSPEEVLKGLQGEIEEVLSGISLAVNVLKELYQTYDFCCVNMKLFFKDKEPVPWEFPSSLAFSRINSFFQRIQTIEELYKTAIEFLKLEKIELGGVRGNLLGSLVTRIYDEVFELVKVFADCKYDPLDPGDSNFDRDYADFEIKIQDLDRRLATIFCQGFDDCSCIKSSAKLLYMCGGLMERPLILAEVAPRYSVMLELFDAELDNAKILYDAQMAASEEGNIPLIHKNMPPVAGQLKWSLELQERLEVSMKHLKHVEHPVMSGAEAKLTYQKYDEMMELLRCHREKIYQQWVAGVDQDCHFNLGQPLILRDAASNLIHVNFSKALVAVLREVKYLNFQQQKEIPDSAESLFSENETFRKFVGNLELIVGWYNEIKTIVKAVEFLLIKSELEAIDVKLLSAETTLFWNGEGVFQYIQEVREILHNLQNRMQKAKQNIEGISQAMKDWSANPLFERKDNKKEALLDLDGRIANLNKRYAAVRDAGVKIQAMVAENAELFRADTLSLPWKDYVIYIDDMVLDEFDQFIRKSLSFLMDNMVIDESIAPLFEIRMELDEDGLTFNPTLEVGSDRGFLALIEGLVNDIYNVARLIPRLAKDRMNYKMDLEDNTDLIEMREEVSSLVINAMKEAEEYQDSFERYSYLWTDNLQEFMKNFLIYGCAVTAEDLDTWTDDTIPKTPPTLAQFQEQIDSYEKLYEEVSKCENTKVFHGWLQCDCRPFKQALLSTIRRWGFMFKRHLSNHVTNSLADLEAFMKVARMGLTKPLKEGDYDGLVEVMGHLMKVKERQAATDNMFEPLKQTIELLKTYGEEMPEEIHLKLQELPEHWANTKKLAIQVKLTVAPLQANEVSILRRKCQQFELKQHEFRERFRREAPFSFSDPNPYKSLNKQQKSISAMEGIMEALSKSGGLFEVPVPDYKQLKACHREVRLLKELWDMVVVVNTSIEDWKTTKWKDINVEQMDIDCKKFAKDMRSLDKEMKTWDAFVGLDNTVKNVITSLRAVSELQNPAIRERHWQQLMQATQVKFKMSEETTLADLLQLNLHSYEDEVRNIVDKAVKESGMEKVLKALDSTWSMMEFQHEPHPRTGTMMLKSSEVLVETLEDNQVQLQNLMMSKYLAHFLKEVTSWQQKLSTADSVISIWFEVQRTWSHLESIFIGSEDIRTQLPGDSQRFDDINQEFKALMEDAVKTPNVVEATSKPGLYNKLEALKKSLAICEKALAEYLETKRLAFPRFYFVSSADLLDILSNGNDPVEVSRHLSKLFDSLCKLKFRLDASDKPLKVGLGMYSKEDEYMVFDQECDLSGQVEVWLNRVLDRMCSTLRHEIPEAVVTYEEKPREQWILDYPAQVALTCTQIWWTTEVGLAFARLEEGYENAIRDYNKKQISQLNVLITLLMGNLNAGDRMKIMTICTIDVHARDVVAKMIVAKVESSQAFTWQAQLRHRWDEEKRHCFANICDAQIQYSYEYLGNTPRLVITPLTDRCYITLTQSLHLIMGGAPAGPAGTGKTETTKDLGRALGTMVYVFNCSEQMDYKSCGNIYKGLAQTGAWGCFDEFNRISVEVLSVIAVQVKCVQDAIRAKKKAFNFLGEIIGLIPTVGIFITMNPGYAGRAELPENLKALFRPCAMVVPDFELICEIMLMAEGFLEARLLARKFITLYTLCKELLSKQDHYDWGLRAIKSVLVVAGSLKRGDPSRAEDQVLMRALRDFNIPKIVTDDLPVFMGLIGDLFPALDVPRKRDLNFEKIIKQSIVELKLQAEDSFVLKVVQLEELLQVRHSVFIVGNAGSGKSQVLKSLNKTYQNLKRKPVAVDLDPKAVTCDELFGIINPVTREWKDGLFSTIMRDLANITHDGPKWIILDGDIDPMWIESLNTVMDDNKVLTLASNERIPLNRTMRLVFEISHLRTATPATVSRAGILYINPADLGWNPVVSSWIERRKVQSEKANLMILFDKYLPTCLDKLRFGFKKITPVPEITVIQTILYLLECLLTEKTVPPDSPRELYELYFVFTCFWAFGGAMFQDQLVDYRVEFSKWWINEFKTIKFPSQGTIFDYYIDPDTKKFLPWTDKVPSFELDPDVPLQASLVHTTETIRIRYFMDLLMEKSWPVMLVGNAGTGKSVLMGDKLESLNTDNYLVQAVPFNFYTTSAMLQGVLEKPLEKKSGRNYGPPGTKKLVYFIDDMNMPEVDKYGTVAPHTLIRQHMDHRHWYDRHKLTLKDIHNCQYVACMNPTSGSFTIDSRLQRHFCVFAVSFPGQEALTTIYNTILTQHLAFRSVSMAIQRISSQLVAAALALHQKITATFLPTAIKFHYVFNLRDLSNIFQGLLFSTAEVLKTPLDLVRLWLHETERVYGDKMVDEKDQETLHRVTMASTKKFFDDLGDELLFAKPNIFCHFAQGIGDPKYVPVTDMAPLNKLLVDVLDSYNEVNAVMNLVLFEDAVAHICRINRILESPRGNALLVGVGGSGKQSLSRLAAYISGLDVFQITLKKGYGIPDLKIDLAAQYIKAAVKNVPSVFLMTDSQVAEEQFLVLINDLLASGEIPGLFMEDEVENIISSMRPQVKSLGMNDTRETCWKFFIEKVRRQLKVILCFSPVGSVLRVRARKFPAVVNCTAIDWFHEWPEDALVSVSARFLEETEGIPWEVKASISFFMSYVHTTVNEMSRVYLATERRYNYTTPKTFLEQIKLYQNLLAKKRTELVAKIERLENGLMKLQSTASQVDDLKAKLAIQEAELKQKNESADQLIQVVGIEAEKVSKEKAIADQEEVKVEVINKNVTEKQKACETDLAKAEPALLAAQEALDTLNKNNLTELKSFGSPPDAVVNVTAAVMILTAPGGKIPKDKSWKAAKIMMGKVDTFLDSLKKFDKEHIPEACLKAFKPYQGNPTFDPEFIRSKSTAAAGLCSWCINIVRFYEVYCDVAPKRQALEEANAELAEAQEKLSRIKNKIAELNANLSNLTSAFEKATAEKIKCQQEADATNRVILLANRLVGGLASENIRWAESVENFRSQGVTLCGDVLLISAFVSYVGYFTKKYRNELMEKFWIPYIHNLKVPIPITNGLDPLSLLTDDADVATWNNQGLPSDRMSTENATILGNTERWPLIVDAQLQGIKWIKNKYRSELKAIRLGQKSYLDVIEQAISEGDTLLIENIGETVDPVLDPLLGRNTIKKGKYIKIGDKEVEYHPKFRLILHTKYFNPHYKPEMQAQCTLINFLVTRDGLEDQLLAAVVAKERPDLEQLKANLTKSQNEFKIVLKELEDSLLARLSAASGNFLGDTALVENLETTKHTASEIEEKVVEAKITEVKINEARENYRPAAERASLLYFILNDLNKINPVYQFSLKAFNVVFEKAIQRTTPANEVKQRVINLTDEITYSVYMYTARGLFERDKLIFLAQVTFQVLSMKKELNPVELDFLLRFPFKAGVVSPVDFLQHQGWGGIKALSEMDEFKNLDSDIEGSAKRWKKLVESEAPEKEIFPKEWKNKTALQKLCMVRCLRPDRMTYAIKNFVEEKMGSKFVEGRSVEFSKSYEESSPSTSIFFILSPGVDPLKDVEALGKKLGFTIDNGKLHNVSLGQGQEVVAENALDVAAEKGHWVILQNIHLVARWLGTLDKKLEHYSTGSHEDYRVFISAEPAPSPETHIIPQGILENAIKITNEPPTGMHANLHKALDLFTQDTLEMCTKEMEFKCMLFALCYFHAVVAERRKFGAQGWNRSYPFNNGDLTISINVLYNYLEANPKVPWDDLRYLFGEIMYGGHITDDWDRRLCRTYLAEYIRTEMLEGDVLLAPGFQIPPNLDYKGYHEYIDENLPPESPYLYGLHPNAEIGFLTVTSEKLFRTVLEMQPKETDSGAGTGVSREEKVKAVLDDILEKIPETFNMAEIMAKAAEKTPYVVVAFQECERMNILTNEMRRSLKELNLGLKGELTITTDVEDLSTALFYDTVPDTWVARAYPSMMGLAAWYADLLLRIRELEAWTTDFALPTTVWLAGFFNPQSFLTAIMQSMARKNEWPLDKMCLSVEVTKKNREDMTAPPREGSYVYGLFMEGARWDTQTGVIAEARLKELTPAMPVIFIKAIPVDRMETKNIYECPVYKTRIRGPTYVWTFNLKTKEKAAKWILAAVALLLQV.

The stem stretch occupies residues 1 to 1808 (MTMAPDVRLE…FANICDAQIQ (1808 aa)). 2 TPR repeats span residues 1019-1052 (TWTDDTIPKTPPTLAQFQEQIDSYEKLYEEVSKC) and 1702-1736 (IWWTTEVGLAFARLEEGYENAIRDYNKKQISQLNV). AAA regions lie at residues 1809 to 2030 (YSYE…VLVV), 2090 to 2311 (KIIK…FGFK), 2417 to 2665 (ELDP…IFQG), and 2763 to 3012 (SYNE…ERRY). Residues 1847-1854 (GPAGTGKT), 2128-2135 (GNAGSGKS), 2455-2462 (GNAGTGKS), and 2801-2808 (GVGGSGKQ) each bind ATP. Coiled coils occupy residues 3027 to 3086 (YQNL…LIQV) and 3257 to 3309 (DVAP…EKIK). Residues 3027–3313 (YQNLLAKKRT…TAEKIKCQQE (287 aa)) form a stalk region. AAA regions lie at residues 3405–3632 (LTDD…EIEE) and 3842–4068 (IKNF…VLYN). The TPR 3 repeat unit spans residues 4147–4182 (PESPYLYGLHPNAEIGFLTVTSEKLFRTVLEMQPKE).

The protein belongs to the dynein heavy chain family. Consists of at least two heavy chains and a number of intermediate and light chains. Expressed in testis. Expressed in spermatozoa (at protein level). Not detected in airway epithelial cells (at protein level).

The protein localises to the cytoplasm. The protein resides in the cytoskeleton. Its subcellular location is the flagellum axoneme. Its function is as follows. Force generating protein component of the outer dynein arms (ODAs) in the sperm flagellum. Produces force towards the minus ends of microtubules. Dynein has ATPase activity; the force-producing power stroke is thought to occur on release of ADP. Plays a major role in sperm motility, implicated in sperm flagellar assembly and beating. This is Dynein axonemal heavy chain 17 from Homo sapiens (Human).